The primary structure comprises 202 residues: Small ribosomal subunit protein uS4 (202 aa).

In terms of domain architecture, S4 RNA-binding spans 91 to 168 (SRLSSVLYNS…QKVPDYLEVD (78 aa)).

This sequence belongs to the universal ribosomal protein uS4 family. Part of the 30S ribosomal subunit. Contacts protein S5. The interaction surface between S4 and S5 is involved in control of translational fidelity.

In terms of biological role, one of the primary rRNA binding proteins, it binds directly to 16S rRNA where it nucleates assembly of the body of the 30S subunit. Functionally, with S5 and S12 plays an important role in translational accuracy. The protein is Small ribosomal subunit protein uS4 of Ehrlichia chaffeensis (strain ATCC CRL-10679 / Arkansas).